The primary structure comprises 157 residues: Transcriptional repressor NrdR (157 aa).

The span at M1–S11 shows a compositional bias: polar residues. Residues M1 to T21 form a disordered region. The segment at C3 to C34 is a zinc-finger region. Residues I49–D139 form the ATP-cone domain.

It belongs to the NrdR family. It depends on Zn(2+) as a cofactor.

In terms of biological role, negatively regulates transcription of bacterial ribonucleotide reductase nrd genes and operons by binding to NrdR-boxes. This chain is Transcriptional repressor NrdR, found in Prochlorococcus marinus (strain MIT 9211).